The primary structure comprises 273 residues: Shikimate dehydrogenase (NADP(+)) (273 aa).

Residues 14-16 (SKS) and Thr-61 contribute to the shikimate site. Lys-65 (proton acceptor) is an active-site residue. Glu-77 serves as a coordination point for NADP(+). Shikimate-binding residues include Asn-86 and Asp-102. NADP(+)-binding positions include 126–130 (GAGGA), 150–155 (NRTYEK), and Met-213. Residue Tyr-215 participates in shikimate binding. Gly-237 contributes to the NADP(+) binding site.

Belongs to the shikimate dehydrogenase family. Homodimer.

It carries out the reaction shikimate + NADP(+) = 3-dehydroshikimate + NADPH + H(+). It functions in the pathway metabolic intermediate biosynthesis; chorismate biosynthesis; chorismate from D-erythrose 4-phosphate and phosphoenolpyruvate: step 4/7. Its function is as follows. Involved in the biosynthesis of the chorismate, which leads to the biosynthesis of aromatic amino acids. Catalyzes the reversible NADPH linked reduction of 3-dehydroshikimate (DHSA) to yield shikimate (SA). This is Shikimate dehydrogenase (NADP(+)) from Aliivibrio fischeri (strain MJ11) (Vibrio fischeri).